The following is a 371-amino-acid chain: N-acetyldiaminopimelate deacetylase (371 aa).

Residue aspartate 68 is part of the active site. Residue glutamate 127 is the Proton acceptor of the active site.

It belongs to the peptidase M20A family. N-acetyldiaminopimelate deacetylase subfamily.

The enzyme catalyses N-acetyl-(2S,6S)-2,6-diaminopimelate + H2O = (2S,6S)-2,6-diaminopimelate + acetate. It functions in the pathway amino-acid biosynthesis; L-lysine biosynthesis via DAP pathway; LL-2,6-diaminopimelate from (S)-tetrahydrodipicolinate (acetylase route): step 3/3. Catalyzes the conversion of N-acetyl-diaminopimelate to diaminopimelate and acetate. The protein is N-acetyldiaminopimelate deacetylase of Listeria monocytogenes serotype 4a (strain HCC23).